A 691-amino-acid polypeptide reads, in one-letter code: MRPSESLVETLRIQALSAPSTSGVYLWKDVHGVVIYVGKAKSLRTRLTSYFRCRHDPKTRVLMSRAAALEYLQTQHEYEALLLENTLIKKHTPRYNICLKDGKTYPLLKLTCEPFPRIFRTRQFCQDGARYFGPFPDVQILDSFLKLILRTYKIRTCTTLRKRKNPCLYYHLKRCDAPCCGWVSPRTYQKDIHEITLLLEGNIDATVARLEKRMKRAVRQEAFEAAARIRDDIQAIRCITHKSLVQDMDERARDYIAWSSTGAIVTFAVLRMRGGKLNGRELFRTRSLKNEEEILSEFLITYYSDHTIPPHLFVHSSAGLAEHWLSHKAGTQCTVTLIPLHTFPTPQTPSSTVTTNAPTLAASQNSNAVQDSGLRSCSETSTMHTLQKAHDACTASEGTRENTPHESAHTPHHRAILAMAQLNAHEDITRYLKNRGADDALKELQKQLHLARIPTLIEGFDISHLGGKYTVASLICFKNGAPDTKNYRLFNLRAHDTRIDDFASMREAIARRYTHTPEGYTLPDLILVDGGIGHVSAAQHVLDALGLSIPLVGLAKRAEELFIPNSPTPLVLDRRNPALHMLQRIRDEAHRFAITRNRHLRTKKELVLSFERLPHVGKVRAHRLLAHFGSFRSLQSATPQDIATAIHIPLTQAHTILHAATRSTTAPVREEYKEHEHDPQGESPGPGRKTD.

The region spanning 20-97 (STSGVYLWKD…IKKHTPRYNI (78 aa)) is the GIY-YIG domain. Residues 204–239 (DATVARLEKRMKRAVRQEAFEAAARIRDDIQAIRCI) form the UVR domain. Residues 662-691 (RSTTAPVREEYKEHEHDPQGESPGPGRKTD) are disordered. Residues 668 to 680 (VREEYKEHEHDPQ) are compositionally biased toward basic and acidic residues.

The protein belongs to the UvrC family. In terms of assembly, interacts with UvrB in an incision complex.

It is found in the cytoplasm. In terms of biological role, the UvrABC repair system catalyzes the recognition and processing of DNA lesions. UvrC both incises the 5' and 3' sides of the lesion. The N-terminal half is responsible for the 3' incision and the C-terminal half is responsible for the 5' incision. This is UvrABC system protein C from Treponema pallidum (strain Nichols).